The following is a 227-amino-acid chain: 2,3-bisphosphoglycerate-dependent phosphoglycerate mutase (227 aa).

Residues 8–15 (RHGKSVWN), 21–22 (TG), arginine 58, 110–113 (ERMY), lysine 121, 137–138 (RR), and 181–182 (GN) each bind substrate. The active-site Tele-phosphohistidine intermediate is histidine 9. Glutamate 110 acts as the Proton donor/acceptor in catalysis.

It belongs to the phosphoglycerate mutase family. BPG-dependent PGAM subfamily.

The enzyme catalyses (2R)-2-phosphoglycerate = (2R)-3-phosphoglycerate. Its pathway is carbohydrate degradation; glycolysis; pyruvate from D-glyceraldehyde 3-phosphate: step 3/5. In terms of biological role, catalyzes the interconversion of 2-phosphoglycerate and 3-phosphoglycerate. The protein is 2,3-bisphosphoglycerate-dependent phosphoglycerate mutase of Chlamydia caviae (strain ATCC VR-813 / DSM 19441 / 03DC25 / GPIC) (Chlamydophila caviae).